The sequence spans 96 residues: uncharacterized protein (96 aa).

Residues 1–18 (MSNVDRYDVHRDGIEKDR) show a composition bias toward basic and acidic residues. Positions 1-96 (MSNVDRYDVH…REQHHQPQKQ (96 aa)) are disordered. A compositionally biased stretch (polar residues) spans 28–46 (QNGQSQSTMDNRPPWNNDT). Residues 70–96 (TIDRQQEELTKNWTESLREQHHQPQKQ) are compositionally biased toward basic and acidic residues.

This is an uncharacterized protein from Caenorhabditis elegans.